The chain runs to 555 residues: O-fucosyltransferase 20 (555 aa).

Residues 1–58 (MALPKNGGNSSSTKKKVSYISVPSQIINSLSSSSLQSLLVSPKKSSRCTNRFSYRNPR) are Cytoplasmic-facing. Residues 59 to 79 (IWFLTLFLVSLFGMLKLGLNV) traverse the membrane as a helical; Signal-anchor for type II membrane protein segment. Over 80–555 (DPISLPFSRY…MCSDRRQQQQ (476 aa)) the chain is Lumenal. Residues 110–130 (KNDTQSSSSSEHRKNETLPTE) are disordered. N-linked (GlcNAc...) asparagine glycosylation is found at Asn-111 and Asn-124. 330–332 (HLR) is a substrate binding site. Asn-371 and Asn-503 each carry an N-linked (GlcNAc...) asparagine glycan. Residues 525 to 555 (QPELRTGRGGKDVTKHPVSECMCSDRRQQQQ) form a disordered region. Residues 529–555 (RTGRGGKDVTKHPVSECMCSDRRQQQQ) are compositionally biased toward basic and acidic residues.

The protein belongs to the glycosyltransferase GT106 family. Highly expressed in embryogenic microspore and in vegetative tissues.

It is found in the golgi apparatus membrane. It participates in glycan metabolism. May play a role in the biosynthesis of matrix polysaccharides and contribute to the biomechanics and development of the plant cell wall. This chain is O-fucosyltransferase 20, found in Brassica napus (Rape).